The primary structure comprises 596 residues: Arginine--tRNA ligase (596 aa).

The 'HIGH' region motif lies at 127-137 (ANPTGPVHVGR).

Belongs to the class-I aminoacyl-tRNA synthetase family.

The protein localises to the cytoplasm. The catalysed reaction is tRNA(Arg) + L-arginine + ATP = L-arginyl-tRNA(Arg) + AMP + diphosphate. This chain is Arginine--tRNA ligase, found in Haloquadratum walsbyi (strain DSM 16790 / HBSQ001).